A 224-amino-acid chain; its full sequence is Cytidylate kinase (224 aa).

11–19 (GPAAAGKST) is a binding site for ATP.

Belongs to the cytidylate kinase family. Type 1 subfamily.

The protein localises to the cytoplasm. The enzyme catalyses CMP + ATP = CDP + ADP. The catalysed reaction is dCMP + ATP = dCDP + ADP. The polypeptide is Cytidylate kinase (Listeria innocua serovar 6a (strain ATCC BAA-680 / CLIP 11262)).